The primary structure comprises 706 residues: Zinc transporter foi (706 aa).

A signal peptide spans Met1–Cys21. Topologically, residues Gln22–Trp261 are extracellular. The span at Gln40–Glu56 shows a compositional bias: polar residues. Residues Gln40–Pro101 form a disordered region. N-linked (GlcNAc...) asparagine glycosylation is found at Asn74, Asn119, Asn176, Asn182, Asn196, and Asn207. Residues Ile262–Ile282 form a helical membrane-spanning segment. At Pro283–Tyr292 the chain is on the cytoplasmic side. Residues Ile293–Leu313 traverse the membrane as a helical segment. Over Leu314 to Lys329 the chain is Extracellular. Residues Gly330–Ile350 form a helical membrane-spanning segment. The Cytoplasmic segment spans residues Ser351–Ser604. Ser376, Ser377, and Ser381 each carry phosphoserine. A helical membrane pass occupies residues Ala605 to Ala625. Over Phe626–Asp631 the chain is Extracellular. Residues Val632–Met652 traverse the membrane as a helical segment. The Cytoplasmic segment spans residues Met653 to Gln665. Residues Phe666–Tyr686 form a helical membrane-spanning segment. At Glu687–His706 the chain is on the extracellular side.

Belongs to the ZIP transporter (TC 2.A.5) family. Post-translationally, glycosylated. Maternal foi has almost completely disappeared by embryonic stage 3 except in the pole cells. In stage 6 embryos, expression is enriched in the invaginating mesoderm. In stage 9 embryos, high levels in the anterior and posterior midgut primordia. In stage 14 embryos, broad expression with low levels in the epidermis.

The protein resides in the cell membrane. Functionally, required for the normal migration of longitudinal and peripheral glial cells. During larval development, required for the migration of the subretinal glia into the eye disk. During embryonic development, also controls the migration of muscle cells toward their attachment sites. Required in the mesoderm for the correct morphogenesis of embryonic gonad and for tracheal branch fusion during tracheal development. Shg may be cooperating with foi to mediate a common mechanism for gonad and tracheal morphogenesis. Acts as a zinc transporter in both yeast and mammalian cells. This is Zinc transporter foi from Drosophila melanogaster (Fruit fly).